Reading from the N-terminus, the 246-residue chain is Ribosomal RNA small subunit methyltransferase G (246 aa).

S-adenosyl-L-methionine-binding positions include Gly81, Phe86, 137-138 (AE), and Arg156. Positions 221–246 (LVLIRKERPTPKAYPRRAGVPAKSPL) are disordered.

This sequence belongs to the methyltransferase superfamily. RNA methyltransferase RsmG family.

The protein localises to the cytoplasm. In terms of biological role, specifically methylates the N7 position of a guanine in 16S rRNA. This Symbiobacterium thermophilum (strain DSM 24528 / JCM 14929 / IAM 14863 / T) protein is Ribosomal RNA small subunit methyltransferase G.